A 188-amino-acid polypeptide reads, in one-letter code: 3-deoxy-D-manno-octulosonate 8-phosphate phosphatase KdsC (188 aa).

Residues Asp32 and Asp34 each contribute to the Mg(2+) site. Substrate is bound by residues Asp34, 55-59, Arg63, Arg78, Arg86, and Lys102; that span reads NVRDG. Asp125 is a binding site for Mg(2+).

As to quaternary structure, homotetramer. It depends on Mg(2+) as a cofactor. Co(2+) serves as cofactor.

The enzyme catalyses 3-deoxy-alpha-D-manno-2-octulosonate-8-phosphate + H2O = 3-deoxy-alpha-D-manno-oct-2-ulosonate + phosphate. The protein operates within carbohydrate biosynthesis; 3-deoxy-D-manno-octulosonate biosynthesis; 3-deoxy-D-manno-octulosonate from D-ribulose 5-phosphate: step 3/3. Its pathway is bacterial outer membrane biogenesis; lipopolysaccharide biosynthesis. Inhibited by calcium, cadmium, mercury, and copper ions. Its function is as follows. Catalyzes the hydrolysis of 3-deoxy-D-manno-octulosonate 8-phosphate (KDO 8-P) to 3-deoxy-D-manno-octulosonate (KDO) and inorganic phosphate. In Escherichia coli (strain B / BL21-DE3), this protein is 3-deoxy-D-manno-octulosonate 8-phosphate phosphatase KdsC.